The primary structure comprises 588 residues: Aspartate--tRNA ligase (588 aa).

Residue Glu172 participates in L-aspartate binding. The interval 196–199 (QLFK) is aspartate. Position 218 (Arg218) interacts with L-aspartate. ATP is bound by residues 218-220 (RDE) and Gln227. His449 provides a ligand contact to L-aspartate. Glu483 is a binding site for ATP. Arg490 serves as a coordination point for L-aspartate. 535–538 (GLDR) is a binding site for ATP.

It belongs to the class-II aminoacyl-tRNA synthetase family. Type 1 subfamily. As to quaternary structure, homodimer.

Its subcellular location is the cytoplasm. The enzyme catalyses tRNA(Asp) + L-aspartate + ATP = L-aspartyl-tRNA(Asp) + AMP + diphosphate. In terms of biological role, catalyzes the attachment of L-aspartate to tRNA(Asp) in a two-step reaction: L-aspartate is first activated by ATP to form Asp-AMP and then transferred to the acceptor end of tRNA(Asp). This Histophilus somni (strain 2336) (Haemophilus somnus) protein is Aspartate--tRNA ligase.